Here is a 414-residue protein sequence, read N- to C-terminus: Dimethylsulfoniopropionate lyase DddY (414 aa).

A signal peptide spans 1-18 (MKYMVLFSGLLFSNVLVA).

This sequence belongs to the DMSP lyase DddY family.

Its subcellular location is the periplasm. The enzyme catalyses S,S-dimethyl-beta-propiothetin = acrylate + dimethyl sulfide + H(+). In terms of biological role, catalyzes the cleavage of dimethylsulfoniopropionate (DMSP) into dimethyl sulfide (DMS) and acrylate. The polypeptide is Dimethylsulfoniopropionate lyase DddY (Shewanella woodyi (strain ATCC 51908 / MS32)).